A 476-amino-acid chain; its full sequence is Glycogen synthase (476 aa).

Lys15 is a binding site for ADP-alpha-D-glucose.

Belongs to the glycosyltransferase 1 family. Bacterial/plant glycogen synthase subfamily.

The enzyme catalyses [(1-&gt;4)-alpha-D-glucosyl](n) + ADP-alpha-D-glucose = [(1-&gt;4)-alpha-D-glucosyl](n+1) + ADP + H(+). It participates in glycan biosynthesis; glycogen biosynthesis. Functionally, synthesizes alpha-1,4-glucan chains using ADP-glucose. In Bacillus anthracis, this protein is Glycogen synthase.